Consider the following 308-residue polypeptide: HTH-type transcriptional activator AllS (308 aa).

Positions 2 to 59 (FDPETLRTFISVAETGSFSKAAERLCKTTATISYRIKLLEENTGVGLFFRTTRSVSLT) constitute an HTH lysR-type domain. The segment at residues 19–38 (FSKAAERLCKTTATISYRIK) is a DNA-binding region (H-T-H motif).

The protein belongs to the LysR transcriptional regulatory family.

Positive regulator essential for the expression of allD operon. Binds to the allD promoter. The chain is HTH-type transcriptional activator AllS (allS) from Salmonella paratyphi A (strain ATCC 9150 / SARB42).